The sequence spans 426 residues: Glutamyl-tRNA reductase (426 aa).

Residues 51–54 (TCNR), Ser110, 115–117 (EAQ), and Gln121 contribute to the substrate site. Cys52 (nucleophile) is an active-site residue. 190–195 (GAGEMA) contacts NADP(+).

The protein belongs to the glutamyl-tRNA reductase family. As to quaternary structure, homodimer.

The catalysed reaction is (S)-4-amino-5-oxopentanoate + tRNA(Glu) + NADP(+) = L-glutamyl-tRNA(Glu) + NADPH + H(+). It participates in porphyrin-containing compound metabolism; protoporphyrin-IX biosynthesis; 5-aminolevulinate from L-glutamyl-tRNA(Glu): step 1/2. Functionally, catalyzes the NADPH-dependent reduction of glutamyl-tRNA(Glu) to glutamate 1-semialdehyde (GSA). The chain is Glutamyl-tRNA reductase from Desulfotalea psychrophila (strain LSv54 / DSM 12343).